The chain runs to 246 residues: Salivary antigen SP32 (246 aa).

Positions 1–23 (MSGHILTVGLIVVVAHCATLSSS) are cleaved as a signal peptide. The segment at 51–160 (DKFYPDISDD…PDLSKYKNSP (110 aa)) is disordered. The segment covering 65–78 (VVRDNGRKGGDRGR) has biased composition (basic and acidic residues). A compositionally biased stretch (polar residues) spans 79–124 (QSTPSGKESHPSATQTGGRRPSQSPCGESRPSGSATSGRRPSQSPR). Over residues 141–155 (QQDRRQNKKQPDLSK) the composition is skewed to basic and acidic residues.

As to quaternary structure, interacts with human DSG1. Interacts with human DSG3. In terms of tissue distribution, salivary gland (at protein level).

It localises to the secreted. Functionally, down-regulates the expression of CD86 and HLA-DR on the surface of lipopolysaccharide (LPS)-stimulated human peripheral blood mononuclear cells (PBMCs). Reduces LPS-induced secretion of IL-1beta/IL1B in human PBMCs. Reduces LPS-induced secretion of various cytokines, such as IL-1beta, TNF-alpha/TNF, MCP-1/CCL2, IL6, IL27 and IL-1alpha/IL1A, in host cultured macrophages probably via inhibition of NF-kappa-B signaling pathway. Reduces production of IFN-gamma/IFNG, IL4 and IL6 in human lymphocytes activated with PMA/ionomycin. Exhibits anti-inflammatory activity in carrageenan-induced paw edema model in rats. In Phlebotomus papatasi (Sandfly), this protein is Salivary antigen SP32.